Consider the following 415-residue polypeptide: Diaminopimelate decarboxylase (415 aa).

Lys54 bears the N6-(pyridoxal phosphate)lysine mark. Residues Gly223 and 264-267 each bind pyridoxal 5'-phosphate; that span reads EPGR. Residues Arg267, Arg303, and Tyr307 each contribute to the substrate site. Residue Cys338 is the Proton donor of the active site. 2 residues coordinate substrate: Glu339 and Tyr374. Pyridoxal 5'-phosphate is bound at residue Tyr374.

It belongs to the Orn/Lys/Arg decarboxylase class-II family. LysA subfamily. In terms of assembly, homodimer. It depends on pyridoxal 5'-phosphate as a cofactor.

The enzyme catalyses meso-2,6-diaminopimelate + H(+) = L-lysine + CO2. Its pathway is amino-acid biosynthesis; L-lysine biosynthesis via DAP pathway; L-lysine from DL-2,6-diaminopimelate: step 1/1. Its function is as follows. Specifically catalyzes the decarboxylation of meso-diaminopimelate (meso-DAP) to L-lysine. This is Diaminopimelate decarboxylase from Buchnera aphidicola subsp. Acyrthosiphon pisum (strain APS) (Acyrthosiphon pisum symbiotic bacterium).